Consider the following 201-residue polypeptide: MICOS complex subunit MIC27 (201 aa).

The N-terminal 31 residues, 1–31 (MTQDKPIVETISNAGEQVTNVFGQFWQLVTS), are a transit peptide targeting the mitochondrion. The Cytoplasmic portion of the chain corresponds to 32 to 117 (KNTTNNGDSK…KCNAYLTEEW (86 aa)). A helical transmembrane segment spans residues 118–138 (TALPKAAAITVGGMAGFVLGL). Residues 139–145 (KRGPVGR) lie on the Mitochondrial intermembrane side of the membrane. A helical transmembrane segment spans residues 146–166 (LLTTTIGLATMAAFCYPIEAV). Residues 167–201 (DVAKTGRAHAEQTWYSFQESPTPSAIVKTNLSPPK) are Cytoplasmic-facing.

The protein belongs to the apolipoprotein O/MICOS complex subunit Mic27 family. Component of the mitochondrial contact site and cristae organizing system (MICOS) complex.

The protein localises to the mitochondrion outer membrane. Sustains mitochondrial morphology probably through maintaining cristae morphology. May act as a component of the MICOS complex, a large protein complex of the mitochondria. In Caenorhabditis elegans, this protein is MICOS complex subunit MIC27.